A 1096-amino-acid chain; its full sequence is MSETPTDQSPQRMSTRNQARVNYTDMAAGNNSVEKEPVFRSPTASTRGRKKRAANVDVADLSASFGNLNNFSTPPKRGRPRGGGLGSARGGRAPMVRRTTTEESAEVDDRELVAAVKSGKKITEAVDRWIGRYNEKFLVAIAEMHQFFFAICGCKGIVTPQMSATLTYKDIICRMTEDFEEDSADYPLVHGGSLKKVRANLHNFIHTLIIRTKASMLFDSNLMDGFVQLLTGMADSQVRAFRHTATFCAMKITSALVDVTIELTQSKEKTSKQIEAEKAKLKNNSAGNEKYEALVAQRTQTEERAEEIRQIIGYLFRSVFVHRYRDVVPDIRCICIQELGHWMDVYPEHFVEDSYLKYIGWSMFDKVGDVRQRCIRALIPLFEKTLILDKLELFVNKFKDRLVSMLLDKDLETSIETVHLMRVLYTVFPTLLTIKDVVPIYELIYASNRPLAVAAGMFLNTKVFRSAEKPGKAPTAANIPLVKDLTTFFIEGDLHQHATYLVDALFESNPIVKDWATMGELLINDQYQLDSNFETKLIEILTCSVVQSATGEPPVGRHIVKKGAPSAKESRDLVEDRQRLTETLIPLIPRLITKFSSDNEKIINLVNIPLHFQLETYLSARMQTHLMELMEGLDSLIEKHLDEELLKAVAELYYHLTTNSSISALVEGHKMKLLDGVAAFIRKSMQQFDDDQMGEEEEALFVSYIKRMAAFAGFMDLRHWDLWDILLKVVSNYTREDTQRDVRERSMQMLFMQLCFDSMNIKKEGETPKADQVRKLKKRRDQLIRIVTETLNEEACGVEQAYLVICDLMILFGSQLAEESKALEPLIWRPDAMVLGNLKIFLDVNVFDVSNLDDMDQQEKIEVMHKMRQHVAQYAKLIIHGAMPVAEASHLIKRYQSHFQDFGDIFKNLLSKCREISFVETGVMICETLKTLYSQLDEDQGTDPLSESFNSIRDLAKRLGPAFGVDYAKNRFAISSLHKKAIDFAFEEYDKENHQMPKNIFFLEIAIEFSGKLLAQDKMAVVRYLNKIYTNRVGTSTVVWEPYRLYLGSLSDRNDDDNMSVRSGMTVTSNATMRSTASSTRGRGRGRGRSRIADDF.

The segment covering 1–21 (MSETPTDQSPQRMSTRNQARV) has biased composition (polar residues). Disordered stretches follow at residues 1–53 (MSET…KKRA) and 67–106 (NLNNFSTPPKRGRPRGGGLGSARGGRAPMVRRTTTEESAE). The stretch at 261–312 (IELTQSKEKTSKQIEAEKAKLKNNSAGNEKYEALVAQRTQTEERAEEIRQII) forms a coiled coil. The region spanning 320–405 (FVHRYRDVVP…NKFKDRLVSM (86 aa)) is the SCD domain. Positions 1057–1096 (DNMSVRSGMTVTSNATMRSTASSTRGRGRGRGRSRIADDF) are disordered. Polar residues predominate over residues 1060 to 1073 (SVRSGMTVTSNATM).

Belongs to the SCC3 family. Component of the cohesin complex, composed of the smc-1 and smc-3 heterodimer attached via their hinge domain, scc-1 which links them, and scc-3. Interacts with scc-1, smc-1 and tim-1. In terms of tissue distribution, expressed in gonadal cells.

Its subcellular location is the nucleus. The protein localises to the chromosome. Its function is as follows. Component of the cohesin complex, a complex required for the cohesion of sister chromatids after DNA replication. The cohesin complex apparently forms a large proteinaceous ring within which sister chromatids can be trapped. At anaphase, the scc-1 subunit of the complex is cleaved and dissociates from chromatin, allowing sister chromatids to segregate. The cohesin complex may also play a role in spindle pole assembly during mitosis. Plays an essential role in cell division during embryonic development. Required for the assembly of the synaptonemal complex between homologous chromosomes to promote sister chromatid cohesion during mitosis and meiosis. Has a role in stabilization of homologous chromosome associations during meiotic synapsis. Required for chromosome segregation during mitosis and meiosis. Plays a role in DNA double-strand break (DSB) repair during meiotic recombination and promotes the assembly of the 9-1-1 cell-cycle checkpoint response complex which is required for inducing apoptosis in response to DNA damage, at DNA damage sites. This is Cohesin subunit scc-3 from Caenorhabditis elegans.